A 151-amino-acid chain; its full sequence is Ribosomal RNA large subunit methyltransferase H (151 aa).

S-adenosyl-L-methionine is bound by residues L70, G99, and 118 to 123 (LSKLTF).

The protein belongs to the RNA methyltransferase RlmH family. In terms of assembly, homodimer.

It localises to the cytoplasm. The enzyme catalyses pseudouridine(1915) in 23S rRNA + S-adenosyl-L-methionine = N(3)-methylpseudouridine(1915) in 23S rRNA + S-adenosyl-L-homocysteine + H(+). Its function is as follows. Specifically methylates the pseudouridine at position 1915 (m3Psi1915) in 23S rRNA. This chain is Ribosomal RNA large subunit methyltransferase H, found in Gloeobacter violaceus (strain ATCC 29082 / PCC 7421).